The sequence spans 565 residues: Sulfite reductase [NADPH] hemoprotein beta-component (565 aa).

Cys-429, Cys-435, Cys-474, and Cys-478 together coordinate [4Fe-4S] cluster. Cys-478 is a siroheme binding site.

This sequence belongs to the nitrite and sulfite reductase 4Fe-4S domain family. As to quaternary structure, alpha(8)-beta(8). The alpha component is a flavoprotein, the beta component is a hemoprotein. The cofactor is siroheme. It depends on [4Fe-4S] cluster as a cofactor.

It carries out the reaction hydrogen sulfide + 3 NADP(+) + 3 H2O = sulfite + 3 NADPH + 4 H(+). Its pathway is sulfur metabolism; hydrogen sulfide biosynthesis; hydrogen sulfide from sulfite (NADPH route): step 1/1. Component of the sulfite reductase complex that catalyzes the 6-electron reduction of sulfite to sulfide. This is one of several activities required for the biosynthesis of L-cysteine from sulfate. The protein is Sulfite reductase [NADPH] hemoprotein beta-component of Shewanella piezotolerans (strain WP3 / JCM 13877).